A 213-amino-acid chain; its full sequence is Pyridoxine/pyridoxamine 5'-phosphate oxidase 2 (213 aa).

Substrate is bound by residues 9 to 12 (RQRY) and Lys67. Residues 62–67 (RTVLLK), 77–78 (FT), Lys84, and Gln106 contribute to the FMN site. Substrate-binding residues include Tyr124, Arg128, and Ser132. Residues 141–142 (QS) and Trp186 contribute to the FMN site. Residue 192–194 (RLH) coordinates substrate. Arg196 lines the FMN pocket.

This sequence belongs to the pyridoxamine 5'-phosphate oxidase family. As to quaternary structure, homodimer. The cofactor is FMN.

It carries out the reaction pyridoxamine 5'-phosphate + O2 + H2O = pyridoxal 5'-phosphate + H2O2 + NH4(+). It catalyses the reaction pyridoxine 5'-phosphate + O2 = pyridoxal 5'-phosphate + H2O2. The protein operates within cofactor metabolism; pyridoxal 5'-phosphate salvage; pyridoxal 5'-phosphate from pyridoxamine 5'-phosphate: step 1/1. It participates in cofactor metabolism; pyridoxal 5'-phosphate salvage; pyridoxal 5'-phosphate from pyridoxine 5'-phosphate: step 1/1. Functionally, catalyzes the oxidation of either pyridoxine 5'-phosphate (PNP) or pyridoxamine 5'-phosphate (PMP) into pyridoxal 5'-phosphate (PLP). This is Pyridoxine/pyridoxamine 5'-phosphate oxidase 2 from Hydrogenovibrio crunogenus (strain DSM 25203 / XCL-2) (Thiomicrospira crunogena).